We begin with the raw amino-acid sequence, 249 residues long: Coproheme decarboxylase (249 aa).

Fe-coproporphyrin III-binding positions include Arg-131, 145–149 (YPMDK), His-172, and Gln-185. Tyr-145 is a catalytic residue.

This sequence belongs to the ChdC family. Type 1 subfamily. The cofactor is Fe-coproporphyrin III.

It catalyses the reaction Fe-coproporphyrin III + 2 H2O2 + 2 H(+) = heme b + 2 CO2 + 4 H2O. It carries out the reaction Fe-coproporphyrin III + H2O2 + H(+) = harderoheme III + CO2 + 2 H2O. The enzyme catalyses harderoheme III + H2O2 + H(+) = heme b + CO2 + 2 H2O. It functions in the pathway porphyrin-containing compound metabolism; protoheme biosynthesis. Involved in coproporphyrin-dependent heme b biosynthesis. Catalyzes the decarboxylation of Fe-coproporphyrin III (coproheme) to heme b (protoheme IX), the last step of the pathway. The reaction occurs in a stepwise manner with a three-propionate intermediate. The sequence is that of Coproheme decarboxylase from Staphylococcus epidermidis (strain ATCC 12228 / FDA PCI 1200).